A 205-amino-acid chain; its full sequence is MLKVGLTGGIGAGKSEVSRLLVEHGAVLIDADRIAREVVAPGTPGLAAVVEAFGTDVLAPDGSLDRPKLGSIVFADPDKLAVLNAIVHPLVGARSRELETAAAADAVVIHDVPLLAENGLAPLYDLVVVVDASPETQLDRLVRLRGMTEQDARARMAAQATREKRLAIADIVMDNDVPLEELERRVGDVWADLVHRAHQPGESQE.

In terms of domain architecture, DPCK spans Lys-3–Gln-204. Gly-11 to Glu-16 provides a ligand contact to ATP.

It belongs to the CoaE family.

The protein resides in the cytoplasm. It catalyses the reaction 3'-dephospho-CoA + ATP = ADP + CoA + H(+). The protein operates within cofactor biosynthesis; coenzyme A biosynthesis; CoA from (R)-pantothenate: step 5/5. Catalyzes the phosphorylation of the 3'-hydroxyl group of dephosphocoenzyme A to form coenzyme A. The chain is Dephospho-CoA kinase from Streptomyces avermitilis (strain ATCC 31267 / DSM 46492 / JCM 5070 / NBRC 14893 / NCIMB 12804 / NRRL 8165 / MA-4680).